A 365-amino-acid chain; its full sequence is Chaperone protein DnaJ (365 aa).

In terms of domain architecture, J spans 4 to 70 (DYYKILGVDR…QKRRMYDQTG (67 aa)). The segment at 139-220 (GTEKRIKYRR…CNGTGTVVVN (82 aa)) adopts a CR-type zinc-finger fold. C152, C155, C168, C171, C194, C197, C208, and C211 together coordinate Zn(2+). CXXCXGXG motif repeat units lie at residues 152–159 (CPDCNGTG), 168–175 (CPTCNGTG), 194–201 (CQTCGGRG), and 208–215 (CPRCNGTG).

The protein belongs to the DnaJ family. As to quaternary structure, homodimer. Zn(2+) is required as a cofactor.

The protein localises to the cytoplasm. In terms of biological role, participates actively in the response to hyperosmotic and heat shock by preventing the aggregation of stress-denatured proteins and by disaggregating proteins, also in an autonomous, DnaK-independent fashion. Unfolded proteins bind initially to DnaJ; upon interaction with the DnaJ-bound protein, DnaK hydrolyzes its bound ATP, resulting in the formation of a stable complex. GrpE releases ADP from DnaK; ATP binding to DnaK triggers the release of the substrate protein, thus completing the reaction cycle. Several rounds of ATP-dependent interactions between DnaJ, DnaK and GrpE are required for fully efficient folding. Also involved, together with DnaK and GrpE, in the DNA replication of plasmids through activation of initiation proteins. This chain is Chaperone protein DnaJ, found in Thermoplasma acidophilum (strain ATCC 25905 / DSM 1728 / JCM 9062 / NBRC 15155 / AMRC-C165).